A 119-amino-acid chain; its full sequence is MSKIDKASRRQKIKDRSRFSVAGTQEKPRLCVYRSLSQIYAQLIDDSGKKTIMAVSSMSKENKELKGSKTEVCHRVGKQIAEKALANGITNVVFDRNGFRYHGRIKALADGAREAGLIF.

This sequence belongs to the universal ribosomal protein uL18 family. Part of the 50S ribosomal subunit; part of the 5S rRNA/L5/L18/L25 subcomplex. Contacts the 5S and 23S rRNAs.

Its function is as follows. This is one of the proteins that bind and probably mediate the attachment of the 5S RNA into the large ribosomal subunit, where it forms part of the central protuberance. The chain is Large ribosomal subunit protein uL18 from Chlorobium luteolum (strain DSM 273 / BCRC 81028 / 2530) (Pelodictyon luteolum).